Consider the following 232-residue polypeptide: Small ribosomal subunit protein uS2 (232 aa).

Belongs to the universal ribosomal protein uS2 family.

This Baumannia cicadellinicola subsp. Homalodisca coagulata protein is Small ribosomal subunit protein uS2.